The primary structure comprises 331 residues: Protein C10 (331 aa).

This sequence belongs to the poxviridae C4/C10 protein family.

The chain is Protein C10 from Vaccinia virus (strain Copenhagen) (VACV).